A 127-amino-acid chain; its full sequence is uncharacterized protein (127 aa).

It belongs to the transcriptional regulatory CopG/NikR family.

This is an uncharacterized protein from Methanocaldococcus jannaschii (strain ATCC 43067 / DSM 2661 / JAL-1 / JCM 10045 / NBRC 100440) (Methanococcus jannaschii).